Reading from the N-terminus, the 91-residue chain is Large ribosomal subunit protein eL43 (91 aa).

The segment at 39 to 60 adopts a C4-type zinc-finger fold; the sequence is CSFCGKDAVRRSSVGIWKCNGC.

Belongs to the eukaryotic ribosomal protein eL43 family.

The protein is Large ribosomal subunit protein eL43 (rpl37A) of Dictyostelium discoideum (Social amoeba).